We begin with the raw amino-acid sequence, 155 residues long: MQIKQIEGALSAKDARFALVISRFNDFIGQKLMEGAIDCIRRHGGSEDNITIYRCPGAFELPMVAKKAALTGKYDALITLGAIIRGSTPHFDVVAAEATKGIAQASLETGVPIAFGVLTTENIEQAIERAGTKAGNKGFDAALTAIEMVNLYRNM.

Residues F24, 58–60 (AFE), and 82–84 (AII) each bind 5-amino-6-(D-ribitylamino)uracil. 87–88 (ST) provides a ligand contact to (2S)-2-hydroxy-3-oxobutyl phosphate. Catalysis depends on H90, which acts as the Proton donor. F115 contacts 5-amino-6-(D-ribitylamino)uracil. R129 contacts (2S)-2-hydroxy-3-oxobutyl phosphate.

Belongs to the DMRL synthase family.

The enzyme catalyses (2S)-2-hydroxy-3-oxobutyl phosphate + 5-amino-6-(D-ribitylamino)uracil = 6,7-dimethyl-8-(1-D-ribityl)lumazine + phosphate + 2 H2O + H(+). Its pathway is cofactor biosynthesis; riboflavin biosynthesis; riboflavin from 2-hydroxy-3-oxobutyl phosphate and 5-amino-6-(D-ribitylamino)uracil: step 1/2. Catalyzes the formation of 6,7-dimethyl-8-ribityllumazine by condensation of 5-amino-6-(D-ribitylamino)uracil with 3,4-dihydroxy-2-butanone 4-phosphate. This is the penultimate step in the biosynthesis of riboflavin. This Chlorobium luteolum (strain DSM 273 / BCRC 81028 / 2530) (Pelodictyon luteolum) protein is 6,7-dimethyl-8-ribityllumazine synthase.